Here is a 156-residue protein sequence, read N- to C-terminus: Small ribosomal subunit protein uS11 (156 aa).

The interval 1-27 (MSEKEQKEVEAKESSGKAEERRETREK) is disordered.

The protein belongs to the universal ribosomal protein uS11 family. Part of the 30S ribosomal subunit.

Its function is as follows. Located on the platform of the 30S subunit. The polypeptide is Small ribosomal subunit protein uS11 (Thermofilum pendens (strain DSM 2475 / Hrk 5)).